Reading from the N-terminus, the 33-residue chain is Photosystem II reaction center protein Psb30 (33 aa).

A helical transmembrane segment spans residues 5-25; the sequence is VVAQLTVLALIVVSGPLVIGL.

Belongs to the Psb30/Ycf12 family. PSII is composed of 1 copy each of membrane proteins PsbA, PsbB, PsbC, PsbD, PsbE, PsbF, PsbH, PsbI, PsbJ, PsbK, PsbL, PsbM, PsbT, PsbX, PsbY, PsbZ, Psb30/Ycf12, peripheral proteins of the oxygen-evolving complex and a large number of cofactors. It forms dimeric complexes.

It localises to the plastid. Its subcellular location is the chloroplast thylakoid membrane. Its function is as follows. A core subunit of photosystem II (PSII), probably helps stabilize the reaction center. This Zygnema circumcarinatum (Green alga) protein is Photosystem II reaction center protein Psb30.